Consider the following 366-residue polypeptide: tRNA/tmRNA (uracil-C(5))-methyltransferase (366 aa).

Gln189, Tyr217, Asn222, Glu238, and Asp298 together coordinate S-adenosyl-L-methionine. Catalysis depends on Cys323, which acts as the Nucleophile. Catalysis depends on Glu357, which acts as the Proton acceptor.

The protein belongs to the class I-like SAM-binding methyltransferase superfamily. RNA M5U methyltransferase family. TrmA subfamily.

It catalyses the reaction uridine(54) in tRNA + S-adenosyl-L-methionine = 5-methyluridine(54) in tRNA + S-adenosyl-L-homocysteine + H(+). The catalysed reaction is uridine(341) in tmRNA + S-adenosyl-L-methionine = 5-methyluridine(341) in tmRNA + S-adenosyl-L-homocysteine + H(+). Functionally, dual-specificity methyltransferase that catalyzes the formation of 5-methyluridine at position 54 (m5U54) in all tRNAs, and that of position 341 (m5U341) in tmRNA (transfer-mRNA). The protein is tRNA/tmRNA (uracil-C(5))-methyltransferase of Shewanella oneidensis (strain ATCC 700550 / JCM 31522 / CIP 106686 / LMG 19005 / NCIMB 14063 / MR-1).